We begin with the raw amino-acid sequence, 692 residues long: MSRTLFVTTALPYANGSFHIGHIMEYIQADIWVRSMRMAGHTVHFVGADDAHGAPIMLKAEKEGITPQALVARYAAERPRYLDGFHIRFDHWHSTDTPENVALSQEIYRALKSEGLIETRSIEQFYDPVKGMFLADRYIKGECPRCHAKDQYGDSCEVCGAVYAPTELINPYSALTGAAPVLKSSDHFFFKLSDPRCVEFLQQWTTGANRQGVKHLQAEVQAKTREWLGGDDGEAKLGDWDISRDAPYFGIEIPDAPGKYFYVWLDAPVGYLASLKSYCAAKGLDFDALLDPAGPTEQVHFIGKDIIYFHALFWPAMLKFAGRKTPDQLNVHGFITVSGEKMSKSRGTGISPLRYLEIGMDAEWLRYYMAAKLNARVEDMDFNPEDFVARVNSDLVGKYVNIASRAAAFITRHFDGELAYDGDTDALAAEFAQQAESIRAAFEAREYNRAVREIMAHADRINQAFDAAQPWVMAKGIGAADAATRARLQDICSRALAGFKALSVMLAPVLPALASRVARELFGANADFAWGDAQQLPQRVAPFKHLMQRVDPKLLDDLFEPPAAEASAPAALPGGEALADTITIDDFAKIDLRIARIVNCEEVEGSTKLLRLTLDVGEGRHRNVFSGIKSAYQPQDLVGKLTVLVANLAPRKMKFGVSEGMVLAASHADEKAEPGIYVLEPWPGAQPGMRVR.

The 'HIGH' region signature appears at 12–22 (PYANGSFHIGH). Zn(2+) is bound by residues Cys143, Cys146, Cys156, and Cys159. The short motif at 341 to 345 (KMSKS) is the 'KMSKS' region element. Lys344 is an ATP binding site. The tRNA-binding domain occupies 586-692 (DFAKIDLRIA…PGAQPGMRVR (107 aa)).

The protein belongs to the class-I aminoacyl-tRNA synthetase family. MetG type 1 subfamily. Homodimer. The cofactor is Zn(2+).

The protein localises to the cytoplasm. The catalysed reaction is tRNA(Met) + L-methionine + ATP = L-methionyl-tRNA(Met) + AMP + diphosphate. Functionally, is required not only for elongation of protein synthesis but also for the initiation of all mRNA translation through initiator tRNA(fMet) aminoacylation. This chain is Methionine--tRNA ligase, found in Bordetella parapertussis (strain 12822 / ATCC BAA-587 / NCTC 13253).